The sequence spans 357 residues: Spermatogenesis- and oogenesis-specific basic helix-loop-helix-containing protein 1 (357 aa).

Basic and acidic residues predominate over residues 1–14; the sequence is MASGGHERANEDYR. The interval 1-40 is disordered; the sequence is MASGGHERANEDYRVSGITGCSKTPQPETQDSLQTSSQSS. Residues 19–31 are compositionally biased toward polar residues; it reads TGCSKTPQPETQD. The 52-residue stretch at 54-105 folds into the bHLH domain; it reads PSLRRNVVSERERRRRISLSCEHLRALLPQFDGRREDMASVLEMSVYFLQLA. The segment at 145–210 is disordered; it reads KPDSGIAKPS…EPESSSLGPG (66 aa). Low complexity predominate over residues 200–209; the sequence is SEPESSSLGP.

As to quaternary structure, forms both hetero- and homodimers with SOHLH2. As to expression, in males, it is mainly expressed in testis, while in females it is mainly expressed in ovary. In testis, it is exclusively expressed in spermatogonia, with a preference for prespermatogonia and type A spermatogonia. In ovary, it is detected in germ cell cysts, primordial follicles, and primary follicles but is undetectable by the secondary follicle stage (at protein level). Expressed in the majority of spermatogonia in adult animals, but not in the most undifferentiated spermatogonial population.

The protein resides in the cytoplasm. Its subcellular location is the nucleus. Transcription regulator of both male and female germline differentiation. Suppresses genes involved in spermatogonial stem cells maintenance, and induces genes important for spermatogonial differentiation. Coordinates oocyte differentiation without affecting meiosis I. The protein is Spermatogenesis- and oogenesis-specific basic helix-loop-helix-containing protein 1 (Sohlh1) of Mus musculus (Mouse).